A 589-amino-acid chain; its full sequence is PAN2-PAN3 deadenylation complex subunit pan3 (589 aa).

Residues methionine 1–histidine 32 are disordered. Residues lysine 34–proline 63 form a C3H1-type zinc finger. The PABPC-interacting motif-2 (PAM-2) motif lies at tyrosine 74–proline 94. Residues glutamate 201 to isoleucine 457 form a pseudokinase domain region. ATP is bound by residues lysine 255 and aspartate 302–threonine 309. A coiled-coil region spans residues glutamate 458–phenylalanine 496. The interval isoleucine 497–serine 589 is knob domain.

The protein belongs to the protein kinase superfamily. PAN3 family. In terms of assembly, homodimer. Forms a heterotrimer with a catalytic subunit pan2 to form the poly(A)-nuclease (PAN) deadenylation complex. Interacts (via PAM-2 motif) with poly(A)-binding protein pab1 (via PABC domain), conferring substrate specificity of the enzyme complex.

It is found in the cytoplasm. The protein localises to the nucleus. Functionally, regulatory subunit of the poly(A)-nuclease (PAN) deadenylation complex, one of two cytoplasmic mRNA deadenylases involved in mRNA turnover. PAN specifically shortens poly(A) tails of RNA and the activity is stimulated by poly(A)-binding protein pab1. PAN deadenylation is followed by rapid degradation of the shortened mRNA tails by the CCR4-NOT complex. Deadenylated mRNAs are then degraded by two alternative mechanisms, namely exosome-mediated 3'-5' exonucleolytic degradation, or deadenylation-dependent mRNA decaping and subsequent 5'-3' exonucleolytic degradation by xrn1. May also be involved in post-transcriptional maturation of mRNA poly(A) tails. ppk26/pan3 acts as a positive regulator for PAN activity, recruiting the catalytic subunit pan2 to mRNA via its interaction with RNA and with pab1. The sequence is that of PAN2-PAN3 deadenylation complex subunit pan3 (ppk26) from Schizosaccharomyces pombe (strain 972 / ATCC 24843) (Fission yeast).